We begin with the raw amino-acid sequence, 440 residues long: Proline--tRNA ligase (440 aa).

The protein belongs to the class-II aminoacyl-tRNA synthetase family. ProS type 2 subfamily. As to quaternary structure, homodimer.

The protein localises to the cytoplasm. The enzyme catalyses tRNA(Pro) + L-proline + ATP = L-prolyl-tRNA(Pro) + AMP + diphosphate. Functionally, catalyzes the attachment of proline to tRNA(Pro) in a two-step reaction: proline is first activated by ATP to form Pro-AMP and then transferred to the acceptor end of tRNA(Pro). In Rhizobium leguminosarum bv. trifolii (strain WSM2304), this protein is Proline--tRNA ligase.